The chain runs to 143 residues: Transcriptional regulator MraZ (143 aa).

SpoVT-AbrB domains lie at 5–47 (EYSH…PMAV) and 76–119 (ALEA…SAEN).

Belongs to the MraZ family. In terms of assembly, forms oligomers.

It is found in the cytoplasm. Its subcellular location is the nucleoid. The polypeptide is Transcriptional regulator MraZ (Leuconostoc mesenteroides subsp. mesenteroides (strain ATCC 8293 / DSM 20343 / BCRC 11652 / CCM 1803 / JCM 6124 / NCDO 523 / NBRC 100496 / NCIMB 8023 / NCTC 12954 / NRRL B-1118 / 37Y)).